The chain runs to 259 residues: Sphinganine C4-monooxygenase 2 (259 aa).

The next 3 membrane-spanning stretches (helical) occupy residues 10–30 (FLGT…YICL), 54–74 (AVVK…VILF), and 91–111 (ILLL…WQYF). The Fatty acid hydroxylase domain occupies 98 to 234 (FIIAMLVIDT…FVMWDRILGT (137 aa)). A Histidine box-1 motif is present at residues 113 to 117 (HRYMH). A Histidine box-2 motif is present at residues 127 to 131 (HSQHH). The Histidine box-3 motif lies at 206 to 212 (YHDVHHQ).

It belongs to the sterol desaturase family. It depends on Fe cation as a cofactor. As to expression, ubiquitous, with higher levels in flowers and roots.

The protein localises to the endoplasmic reticulum membrane. The enzyme catalyses a dihydroceramide + 2 Fe(II)-[cytochrome b5] + O2 + 2 H(+) = a phytoceramide + 2 Fe(III)-[cytochrome b5] + H2O. It participates in membrane lipid metabolism; sphingolipid biosynthesis. Its function is as follows. Involved in sphingolipid trihydroxy long-chain base (4-hydroxysphinganine) biosynthesis. Can use C18- and C20-sphinganine as substrates to produce C18- and C20-phytosphinganines (D-ribo-2-amino-1,3,4-trihydroxyoctadecane and -eicosane). This is Sphinganine C4-monooxygenase 2 (SBH2) from Arabidopsis thaliana (Mouse-ear cress).